Reading from the N-terminus, the 371-residue chain is RxLR effector protein PITG_12731 (371 aa).

The first 24 residues, 1–24 (MRFYSVLLTIVTLIASTYDAKVNA), serve as a signal peptide directing secretion. Positions 43 to 53 (RMLRADHADER) match the RxLR-dEER motif.

This sequence belongs to the RxLR effector family.

It localises to the secreted. It is found in the host nucleus. The protein resides in the host cytoplasm. Functionally, effector that enhances P.infestans colonization of Nicotiana benthamiana leaves. This chain is RxLR effector protein PITG_12731, found in Phytophthora infestans (strain T30-4) (Potato late blight agent).